We begin with the raw amino-acid sequence, 137 residues long: Large ribosomal subunit protein uL16 (137 aa).

It belongs to the universal ribosomal protein uL16 family. In terms of assembly, part of the 50S ribosomal subunit.

In terms of biological role, binds 23S rRNA and is also seen to make contacts with the A and possibly P site tRNAs. This chain is Large ribosomal subunit protein uL16, found in Brucella abortus (strain S19).